Reading from the N-terminus, the 373-residue chain is Probable pectin lyase D (373 aa).

The signal sequence occupies residues 1–24; the sequence is MKYAAALTAVAALAARAAAVGVSG. 2 disulfide bridges follow: cysteine 82–cysteine 101 and cysteine 91–cysteine 225. N-linked (GlcNAc...) asparagine glycosylation is present at asparagine 128. Residue arginine 255 is part of the active site. Asparagine 274 carries an N-linked (GlcNAc...) asparagine glycan. An intrachain disulfide couples cysteine 321 to cysteine 329. Asparagine 348 carries N-linked (GlcNAc...) asparagine glycosylation. Low complexity predominate over residues 354-366; the sequence is LPSADAASTSPAS. Residues 354-373 form a disordered region; sequence LPSADAASTSPASNAGQGNL.

The protein belongs to the polysaccharide lyase 1 family.

It localises to the secreted. The enzyme catalyses Eliminative cleavage of (1-&gt;4)-alpha-D-galacturonan methyl ester to give oligosaccharides with 4-deoxy-6-O-methyl-alpha-D-galact-4-enuronosyl groups at their non-reducing ends.. Its function is as follows. Pectinolytic enzymes consist of four classes of enzymes: pectin lyase, polygalacturonase, pectin methylesterase and rhamnogalacturonase. Among pectinolytic enzymes, pectin lyase is the most important in depolymerization of pectin, since it cleaves internal glycosidic bonds of highly methylated pectins. The sequence is that of Probable pectin lyase D (pelD) from Aspergillus niger (strain ATCC MYA-4892 / CBS 513.88 / FGSC A1513).